Reading from the N-terminus, the 500-residue chain is Probable cytosol aminopeptidase (500 aa).

Residues lysine 265 and aspartate 270 each contribute to the Mn(2+) site. Lysine 277 is an active-site residue. Positions 288, 347, and 349 each coordinate Mn(2+). Residue arginine 351 is part of the active site.

This sequence belongs to the peptidase M17 family. It depends on Mn(2+) as a cofactor.

It localises to the cytoplasm. It carries out the reaction Release of an N-terminal amino acid, Xaa-|-Yaa-, in which Xaa is preferably Leu, but may be other amino acids including Pro although not Arg or Lys, and Yaa may be Pro. Amino acid amides and methyl esters are also readily hydrolyzed, but rates on arylamides are exceedingly low.. It catalyses the reaction Release of an N-terminal amino acid, preferentially leucine, but not glutamic or aspartic acids.. Functionally, presumably involved in the processing and regular turnover of intracellular proteins. Catalyzes the removal of unsubstituted N-terminal amino acids from various peptides. This is Probable cytosol aminopeptidase from Rickettsia africae (strain ESF-5).